The primary structure comprises 89 residues: MGTKREAILKVLENLTPEELKKFKMKLGTVPLREGFERIPRGALGQLDIVDLTDKLVASYYEDYAAELVVAVLRDMRMLEEAARLQRAA.

The region spanning 1–89 is the Pyrin domain; it reads MGTKREAILK…EEAARLQRAA (89 aa).

In terms of assembly, interacts with PYCARD/ASC (via pyrin domain). Phosphorylated. As to expression, predominantly expressed in monocytes, macrophages and granulocytes.

It is found in the cytoplasm. In terms of biological role, associates with PYCARD/ASC and modulates its ability to collaborate with MEFV/pyrin and NLRP3/cryopyrin in NF-kappa-B and pro-caspase-1 activation. Suppresses kinase activity of NF-kappa-B inhibitor kinase (IKK) complex, expression of NF-kappa-B inducible genes and inhibits NF-kappa-B activation by cytokines and LPS. The polypeptide is Pyrin domain-containing protein 1 (Homo sapiens (Human)).